Reading from the N-terminus, the 257-residue chain is MTSICSSKFQQQHYQLTNSNIFLLQHQHHHQTQQHQLIAPKIPLGTSQLQNMQQSQQSNVGPMLSSQKKKFNYNNMPYGEQLPSVARRNARERNRVKQVNNGFVNLRQHLPQTVVNSLSNGGRGSSKKLSKVDTLRIAVEYIRGLQDMLDDGTASSTRHIYNSADESSNDGSSYNDYNDSLDSSQQFLTGATQSAQSHSYHSASPTPSYSGSEISGGGYIKQELQEQDLKFDSFDSFSDEQPDDEELLDYISSWQEQ.

A bHLH domain is found at Pro-83–Leu-145. The disordered stretch occupies residues Tyr-161–Lys-221. Composition is skewed to low complexity over residues Asp-165–Ser-184 and Gln-193–Glu-213.

As to quaternary structure, efficient DNA binding requires dimerization with another bHLH protein. As to expression, l(1)SC, SC and AC strongly label the presumptive stomatogastric nervous system, while ASE is more prominent in the presumptive procephalic lobe.

AS-C proteins are involved in the determination of the neuronal precursors in the peripheral nervous system and the central nervous system. In Drosophila melanogaster (Fruit fly), this protein is Achaete-scute complex protein T3 (l(1)sc).